The primary structure comprises 456 residues: Glutamyl-tRNA(Gln) amidotransferase subunit A (456 aa).

Catalysis depends on charge relay system residues Lys-74 and Ser-149. Ser-173 serves as the catalytic Acyl-ester intermediate.

This sequence belongs to the amidase family. GatA subfamily. As to quaternary structure, heterotrimer of A, B and C subunits.

The enzyme catalyses L-glutamyl-tRNA(Gln) + L-glutamine + ATP + H2O = L-glutaminyl-tRNA(Gln) + L-glutamate + ADP + phosphate + H(+). Functionally, allows the formation of correctly charged Gln-tRNA(Gln) through the transamidation of misacylated Glu-tRNA(Gln) in organisms which lack glutaminyl-tRNA synthetase. The reaction takes place in the presence of glutamine and ATP through an activated gamma-phospho-Glu-tRNA(Gln). The polypeptide is Glutamyl-tRNA(Gln) amidotransferase subunit A (Methanobrevibacter smithii (strain ATCC 35061 / DSM 861 / OCM 144 / PS)).